Reading from the N-terminus, the 204-residue chain is 3-isopropylmalate dehydratase small subunit (204 aa).

It belongs to the LeuD family. LeuD type 1 subfamily. In terms of assembly, heterodimer of LeuC and LeuD.

It catalyses the reaction (2R,3S)-3-isopropylmalate = (2S)-2-isopropylmalate. Its pathway is amino-acid biosynthesis; L-leucine biosynthesis; L-leucine from 3-methyl-2-oxobutanoate: step 2/4. Its function is as follows. Catalyzes the isomerization between 2-isopropylmalate and 3-isopropylmalate, via the formation of 2-isopropylmaleate. This is 3-isopropylmalate dehydratase small subunit from Roseiflexus castenholzii (strain DSM 13941 / HLO8).